Here is a 432-residue protein sequence, read N- to C-terminus: Neuronal pentraxin-1 (432 aa).

Positions 1–22 (MPAGRAARTCALLALCLLGAGA) are cleaved as a signal peptide. The segment at 90–122 (ESQSTLDPGAGEARAGGGRKQPGSGKNTMGDLS) is disordered. N-linked (GlcNAc...) asparagine glycans are attached at residues Asn-154 and Asn-193. The 203-residue stretch at 226–428 (DKFQLTFPLR…GATKWTFEAC (203 aa)) folds into the Pentraxin (PTX) domain. Cys-256 and Cys-316 are disulfide-bonded. 5 residues coordinate Ca(2+): Asn-280, Glu-358, Gln-359, Asp-360, and Gln-370.

In terms of assembly, homooligomer or heterooligomer (probably pentamer) with neuronal pentraxin receptor (NPTXR). It depends on Ca(2+) as a cofactor.

The protein localises to the secreted. The protein resides in the cytoplasmic vesicle. Its subcellular location is the secretory vesicle. It localises to the endoplasmic reticulum. In terms of biological role, may be involved in mediating uptake of synaptic material during synapse remodeling or in mediating the synaptic clustering of AMPA glutamate receptors at a subset of excitatory synapses. The chain is Neuronal pentraxin-1 (NPTX1) from Homo sapiens (Human).